The chain runs to 158 residues: D-aminoacyl-tRNA deacylase (158 aa).

Residues 143–144 (GP) carry the Gly-cisPro motif, important for rejection of L-amino acids motif.

The protein belongs to the DTD family. As to quaternary structure, homodimer.

Its subcellular location is the cytoplasm. The catalysed reaction is glycyl-tRNA(Ala) + H2O = tRNA(Ala) + glycine + H(+). It catalyses the reaction a D-aminoacyl-tRNA + H2O = a tRNA + a D-alpha-amino acid + H(+). Its function is as follows. An aminoacyl-tRNA editing enzyme that deacylates mischarged D-aminoacyl-tRNAs. Also deacylates mischarged glycyl-tRNA(Ala), protecting cells against glycine mischarging by AlaRS. Acts via tRNA-based rather than protein-based catalysis; rejects L-amino acids rather than detecting D-amino acids in the active site. By recycling D-aminoacyl-tRNA to D-amino acids and free tRNA molecules, this enzyme counteracts the toxicity associated with the formation of D-aminoacyl-tRNA entities in vivo and helps enforce protein L-homochirality. The chain is D-aminoacyl-tRNA deacylase from Solidesulfovibrio magneticus (strain ATCC 700980 / DSM 13731 / RS-1) (Desulfovibrio magneticus).